Here is a 342-residue protein sequence, read N- to C-terminus: MLKEPPKNSREKTKNLLLTLQDKICSGLENIDGKGKFTEESWLRDEGGGGRSRVLKNGSIFEQAGVNFSEVQGKELPQSIISQRPEAKGHEWFATGTSMVLHPKNPFIPTVHLNYRYFEAGPVWWFGGGADLTPFYPYLSDVRNFHKEHKKACEKVDKDLHKVFKPWCDEYFFLKHRNESRGIGGIFYDYQDGSGNIYRGNNQNGEASKVSENIGKSNLNWDNLFSLAENCGQAFLPSYLPIIEKRANKTYTSKEREFQLYRRGRYVEFNLVWDRGTIFGLQTNGRTESILMSLPPLARWEYGYKAKKGSREEFLTSIFTKPQDWLNDKDLENFCMENNIFD.

S98 is a binding site for substrate. A divalent metal cation-binding residues include H102 and H112. H112 acts as the Proton donor in catalysis. 114–116 (NYR) lines the substrate pocket. A divalent metal cation-binding residues include H146 and H176. The tract at residues 266 to 301 (YVEFNLVWDRGTIFGLQTNGRTESILMSLPPLARWE) is important for dimerization.

It belongs to the aerobic coproporphyrinogen-III oxidase family. In terms of assembly, homodimer. The cofactor is a divalent metal cation.

Its subcellular location is the cytoplasm. The enzyme catalyses coproporphyrinogen III + O2 + 2 H(+) = protoporphyrinogen IX + 2 CO2 + 2 H2O. It functions in the pathway porphyrin-containing compound metabolism; protoporphyrin-IX biosynthesis; protoporphyrinogen-IX from coproporphyrinogen-III (O2 route): step 1/1. Functionally, involved in the heme and chlorophyll biosynthesis. Catalyzes the aerobic oxidative decarboxylation of propionate groups of rings A and B of coproporphyrinogen-III to yield the vinyl groups in protoporphyrinogen-IX. This is Oxygen-dependent coproporphyrinogen-III oxidase from Prochlorococcus marinus (strain MIT 9312).